Consider the following 228-residue polypeptide: LexA repressor (228 aa).

The H-T-H motif DNA-binding region spans 26-46 (FDEMKDALDLRSKSGIHRLIT). Catalysis depends on for autocatalytic cleavage activity residues Ser149 and Lys187.

Belongs to the peptidase S24 family. As to quaternary structure, homodimer.

It catalyses the reaction Hydrolysis of Ala-|-Gly bond in repressor LexA.. Functionally, represses a number of genes involved in the response to DNA damage (SOS response), including recA and lexA. In the presence of single-stranded DNA, RecA interacts with LexA causing an autocatalytic cleavage which disrupts the DNA-binding part of LexA, leading to derepression of the SOS regulon and eventually DNA repair. The protein is LexA repressor of Cereibacter sphaeroides (strain ATCC 17025 / ATH 2.4.3) (Rhodobacter sphaeroides).